We begin with the raw amino-acid sequence, 594 residues long: Putative aldehyde oxidase Art an 7 (594 aa).

The first 23 residues, 1 to 23 (MASSIKTVILFLLPLLLAYSVLA), serve as a signal peptide directing secretion. The segment at 28–56 (TDGGDKPGPEIDDGGGDKPVPGNNDGASD) is disordered.

In terms of processing, the N-terminus is blocked. Glycosylated. Expressed in pollen (at protein level).

It localises to the cytoplasm. It catalyses the reaction an aldehyde + O2 + H2O = a carboxylate + H2O2 + H(+). Catalyzes the oxidation of aldehydes to the corresponding carboxylate by coupling the reaction to the reduction of dioxygen to hydrogen peroxide. Substrates include glyoxal and other aldehydes. Does not have enzymatic activity on D-galactose. The protein is Putative aldehyde oxidase Art an 7 of Artemisia annua (Sweet wormwood).